The following is a 552-amino-acid chain: Phosphoglucomutase (552 aa).

Ser-143 acts as the Phosphoserine intermediate in catalysis. Mg(2+)-binding residues include Ser-143, Asp-295, Asp-297, and Asp-299.

This sequence belongs to the phosphohexose mutase family. Requires Mg(2+) as cofactor.

The catalysed reaction is alpha-D-glucose 1-phosphate = alpha-D-glucose 6-phosphate. The protein operates within glycolipid metabolism; diglucosyl-diacylglycerol biosynthesis. Functionally, catalyzes the interconversion between glucose-6-phosphate and alpha-glucose-1-phosphate. This is the first step in the biosynthesis of diglucosyl-diacylglycerol (Glc2-DAG), i.e. the predominant glycolipid found in the S.aureus membrane, which is also used as a membrane anchor for lipoteichoic acid (LTA). This Staphylococcus aureus (strain bovine RF122 / ET3-1) protein is Phosphoglucomutase (pgcA).